The following is a 521-amino-acid chain: Beta-glucosidase 11 (521 aa).

Residues 1 to 23 (MKLLSNSLMFLPLLALALTAVSS) form the signal peptide. A beta-D-glucoside-binding positions include Gln-45, His-144, and 189–190 (NE). The active-site Proton donor is the Glu-190. Cysteines 209 and 217 form a disulfide. N-linked (GlcNAc...) asparagine glycosylation is found at Asn-216 and Asn-221. Tyr-356 contributes to the a beta-D-glucoside binding site. N-linked (GlcNAc...) asparagine glycans are attached at residues Asn-364 and Asn-388. A beta-D-glucoside-binding residues include Glu-422, Trp-466, and Phe-482. The active-site Nucleophile is the Glu-422.

It belongs to the glycosyl hydrolase 1 family.

The catalysed reaction is Hydrolysis of terminal, non-reducing beta-D-glucosyl residues with release of beta-D-glucose.. The sequence is that of Beta-glucosidase 11 from Arabidopsis thaliana (Mouse-ear cress).